The following is a 265-amino-acid chain: Homeobox protein CDX-1 (265 aa).

Residues 9 to 153 (KDSPVYPGPA…GGGGSGKTRT (145 aa)) form a disordered region. Over residues 30 to 42 (YGPPAPPPAPPQY) the composition is skewed to pro residues. Over residues 73-92 (AAAYGPGPAAPAASPASLAF) the composition is skewed to low complexity. The span at 93–108 (GPPPDFSPVPAPPGPG) shows a compositional bias: pro residues. Positions 110-126 (GLLAQPLGGPGTPSSPG) are enriched in low complexity. A DNA-binding region (homeobox) is located at residues 154-213 (KDKYRVVYTDHQRLELEKEFHYSRYITIRRKSELAANLGLTERQVKIWFQNRRAKERKVN). Residues 157-178 (YRVVYTDHQRLELEKEFHYSRY) form an interaction with DNA region. The tract at residues 196-207 (RQVKIWFQNRRA) is interaction with 5-mCpG DNA. The span at 207–217 (AKERKVNKKKQ) shows a compositional bias: basic residues. Residues 207 to 265 (AKERKVNKKKQQQQQPPQPPMAHDITATPAGPSLGGLCPSNTSLLATSSPMPVKEEFLP) are disordered. Residues 245-256 (PSNTSLLATSSP) show a composition bias toward polar residues.

The protein belongs to the Caudal homeobox family. As to expression, intestinal epithelium.

The protein localises to the nucleus. Functionally, plays a role in transcriptional regulation. Involved in activated KRAS-mediated transcriptional activation of PRKD1 in colorectal cancer (CRC) cells. Binds to the PRKD1 promoter in colorectal cancer (CRC) cells. Could play a role in the terminal differentiation of the intestine. Binds preferentially to methylated DNA. The sequence is that of Homeobox protein CDX-1 (CDX1) from Homo sapiens (Human).